The following is a 251-amino-acid chain: Ubiquinone/menaquinone biosynthesis C-methyltransferase UbiE (251 aa).

Residues Thr-74, Asp-95, 123–124 (NA), and Ser-140 each bind S-adenosyl-L-methionine.

Belongs to the class I-like SAM-binding methyltransferase superfamily. MenG/UbiE family.

The catalysed reaction is a 2-demethylmenaquinol + S-adenosyl-L-methionine = a menaquinol + S-adenosyl-L-homocysteine + H(+). It catalyses the reaction a 2-methoxy-6-(all-trans-polyprenyl)benzene-1,4-diol + S-adenosyl-L-methionine = a 5-methoxy-2-methyl-3-(all-trans-polyprenyl)benzene-1,4-diol + S-adenosyl-L-homocysteine + H(+). It participates in quinol/quinone metabolism; menaquinone biosynthesis; menaquinol from 1,4-dihydroxy-2-naphthoate: step 2/2. The protein operates within cofactor biosynthesis; ubiquinone biosynthesis. In terms of biological role, methyltransferase required for the conversion of demethylmenaquinol (DMKH2) to menaquinol (MKH2) and the conversion of 2-polyprenyl-6-methoxy-1,4-benzoquinol (DDMQH2) to 2-polyprenyl-3-methyl-6-methoxy-1,4-benzoquinol (DMQH2). The sequence is that of Ubiquinone/menaquinone biosynthesis C-methyltransferase UbiE from Photorhabdus laumondii subsp. laumondii (strain DSM 15139 / CIP 105565 / TT01) (Photorhabdus luminescens subsp. laumondii).